The primary structure comprises 423 residues: MSYVIDRRLNGKNKSTVNRQRFLRRYREHIKKAVEEAVSRRSITDMEHGEQISIPGRDIDEPVLHHGRGGRQTVVHPGNKEFTAGEHIARPSGGGGGRGGGKASNSGEGMDDFVFQITQEEFLDFMFEDLELPNLVKRHITGTDTFKTVRAGISNDGNPSRINIVRTLRSAHARRIALSGGSRAKLRAALKELERIKREEPDNLGDIQELELEIAKLRARIDRVPFLDTFDLKYNLLVKQPNPTSKAVMFCLMDVSGSMTQATKDIAKRFFILLYLFLKRNYEKIEVVFIRHHTSAREVDEEEFFYSRETGGTIVSSALKMMQEIMAERYPTHEWNIYAAQASDGDNWNDDSPVCRDILLKQIMPFVQYYTYVEITPREHQALWFEYERVREAFEDSFAQQQIVSASDIYPVFRELFQRRLVA.

The tract at residues 84–107 (AGEHIARPSGGGGGRGGGKASNSG) is disordered. Positions 92–102 (SGGGGGRGGGK) are enriched in gly residues.

It belongs to the UPF0229 family.

In Pseudomonas aeruginosa (strain LESB58), this protein is UPF0229 protein PLES_05841.